A 409-amino-acid polypeptide reads, in one-letter code: Tyrosine--tRNA ligase (409 aa).

The 'HIGH' region signature appears at 54 to 63; the sequence is PTAPDIHLGH. The 'KMSKS' region signature appears at 238–242; sequence KMSKS. Lys241 is a binding site for ATP. Residues 347–407 form the S4 RNA-binding domain; that stretch reads QGILRILREA…GKRKFARVKL (61 aa).

Belongs to the class-I aminoacyl-tRNA synthetase family. TyrS type 2 subfamily. In terms of assembly, homodimer.

Its subcellular location is the cytoplasm. The enzyme catalyses tRNA(Tyr) + L-tyrosine + ATP = L-tyrosyl-tRNA(Tyr) + AMP + diphosphate + H(+). Its function is as follows. Catalyzes the attachment of tyrosine to tRNA(Tyr) in a two-step reaction: tyrosine is first activated by ATP to form Tyr-AMP and then transferred to the acceptor end of tRNA(Tyr). This chain is Tyrosine--tRNA ligase, found in Bordetella bronchiseptica (strain ATCC BAA-588 / NCTC 13252 / RB50) (Alcaligenes bronchisepticus).